Consider the following 190-residue polypeptide: Large ribosomal subunit protein uL5 (190 aa).

Belongs to the universal ribosomal protein uL5 family. As to quaternary structure, part of the 50S ribosomal subunit; contacts the 5S rRNA and probably tRNA. Forms a bridge to the 30S subunit in the 70S ribosome.

Functionally, this is one of the proteins that bind and probably mediate the attachment of the 5S RNA into the large ribosomal subunit, where it forms part of the central protuberance. In the 70S ribosome it contacts protein S13 of the 30S subunit (bridge B1b), connecting the 2 subunits; this bridge is implicated in subunit movement. May contact the P site tRNA; the 5S rRNA and some of its associated proteins might help stabilize positioning of ribosome-bound tRNAs. This Methanocaldococcus jannaschii (strain ATCC 43067 / DSM 2661 / JAL-1 / JCM 10045 / NBRC 100440) (Methanococcus jannaschii) protein is Large ribosomal subunit protein uL5.